We begin with the raw amino-acid sequence, 638 residues long: CTTNBP2 N-terminal-like protein (638 aa).

Positions 87 to 284 form a coiled coil; the sequence is MKQCKNMQER…KDLEAAQQHR (198 aa). 4 disordered regions span residues 280-303, 360-430, 463-490, and 514-621; these read AQQH…TATE, RELT…PCSS, RHKF…LSPT, and NQGP…CSPS. The residue at position 285 (Ser285) is a Phosphoserine. Residues 360–371 show a composition bias toward polar residues; that stretch reads RELTSDSSTENQ. 2 stretches are compositionally biased toward low complexity: residues 401–430 and 467–477; these read TMPS…PCSS and QSQADQDQQAS. Residues Ser481, Ser488, Ser522, Ser526, Ser559, Ser562, and Ser567 each carry the phosphoserine modification. A compositionally biased stretch (polar residues) spans 514–528; that stretch reads NQGPIKPVSPNSSPF. Thr569 and Thr589 each carry phosphothreonine. Residues 589 to 620 are compositionally biased toward polar residues; it reads TPSQSATTPVTKTHSQASSLAATEDLASSCSP. A Phosphoserine modification is found at Ser591.

Interacts with CTTN/cortactin; this interaction may redistribute CTTN to stress fibers. May form homomers. Associates with the core of STRIPAK complexes composed of PP2A catalytic and scaffolding subunits, the striatins (PP2A regulatory subunits), the striatin-associated proteins MOB4, STRIP1 and STRIP2, PDCD10 and members of the STE20 kinases, such as STK24 and STK26. Predominantly expressed in skin, also detectable in spleen and lung (at protein level). Very low levels, if any, in brain (at protein level).

The protein resides in the cell projection. It is found in the lamellipodium. The protein localises to the cytoplasm. It localises to the cytoskeleton. Its subcellular location is the stress fiber. In terms of biological role, regulates lamellipodial actin dynamics in a CTTN-dependent manner. Associates with core striatin-interacting phosphatase and kinase (STRIPAK) complex to form CTTNBP2NL-STRIPAK complexes. STRIPAK complexes have critical roles in protein (de)phosphorylation and are regulators of multiple signaling pathways including Hippo, MAPK, nuclear receptor and cytoskeleton remodeling. Different types of STRIPAK complexes are involved in a variety of biological processes such as cell growth, differentiation, apoptosis, metabolism and immune regulation. The sequence is that of CTTNBP2 N-terminal-like protein (Cttnbp2nl) from Mus musculus (Mouse).